The sequence spans 968 residues: RNA polymerase-associated protein RapA (968 aa).

Residues 163–332 form the Helicase ATP-binding domain; that stretch reads EVGRRFAPRV…FARLRLLDPD (170 aa). 176 to 183 serves as a coordination point for ATP; sequence DEVGLGKT. Positions 278 to 281 match the DEAH box motif; it reads DEAH. A Helicase C-terminal domain is found at 491-641; the sequence is RVDWLINFLK…AFEQTCPSGH (151 aa).

It belongs to the SNF2/RAD54 helicase family. RapA subfamily. In terms of assembly, interacts with the RNAP. Has a higher affinity for the core RNAP than for the holoenzyme. Its ATPase activity is stimulated by binding to RNAP.

In terms of biological role, transcription regulator that activates transcription by stimulating RNA polymerase (RNAP) recycling in case of stress conditions such as supercoiled DNA or high salt concentrations. Probably acts by releasing the RNAP, when it is trapped or immobilized on tightly supercoiled DNA. Does not activate transcription on linear DNA. Probably not involved in DNA repair. This chain is RNA polymerase-associated protein RapA, found in Shewanella sediminis (strain HAW-EB3).